The chain runs to 176 residues: Inorganic pyrophosphatase (176 aa).

Substrate is bound by residues lysine 30, arginine 44, and tyrosine 56. Aspartate 66, aspartate 71, and aspartate 103 together coordinate Mg(2+). Tyrosine 142 lines the substrate pocket.

It belongs to the PPase family. In terms of assembly, homohexamer. It depends on Mg(2+) as a cofactor.

Its subcellular location is the cytoplasm. The catalysed reaction is diphosphate + H2O = 2 phosphate + H(+). Its function is as follows. Catalyzes the hydrolysis of inorganic pyrophosphate (PPi) forming two phosphate ions. The sequence is that of Inorganic pyrophosphatase from Brucella melitensis biotype 1 (strain ATCC 23456 / CCUG 17765 / NCTC 10094 / 16M).